Consider the following 160-residue polypeptide: SPbeta prophage-derived uncharacterized protein YokE (160 aa).

This Bacillus subtilis (strain 168) protein is SPbeta prophage-derived uncharacterized protein YokE (yokE).